Consider the following 436-residue polypeptide: GTPase Der (436 aa).

EngA-type G domains follow at residues 4-167 and 176-351; these read PIVA…KEEE and IRLS…ENHK. GTP contacts are provided by residues 10-17, 57-61, 119-122, 182-189, 229-233, and 294-297; these read GRPNVGKS, DTGGI, NKVD, DTAGM, and NKWD. Residues 352-436 enclose the KH-like domain; that stretch reads KRVQSSTLNE…PVHIIARKRN (85 aa).

The protein belongs to the TRAFAC class TrmE-Era-EngA-EngB-Septin-like GTPase superfamily. EngA (Der) GTPase family. In terms of assembly, associates with the 50S ribosomal subunit.

GTPase that plays an essential role in the late steps of ribosome biogenesis. This Staphylococcus saprophyticus subsp. saprophyticus (strain ATCC 15305 / DSM 20229 / NCIMB 8711 / NCTC 7292 / S-41) protein is GTPase Der.